Here is a 308-residue protein sequence, read N- to C-terminus: Acetyl-coenzyme A carboxylase carboxyl transferase subunit beta (308 aa).

A CoA carboxyltransferase N-terminal domain is found at 26–295 (LWIKDPETGE…EQKPLEPEIL (270 aa)).

It belongs to the AccD/PCCB family. Acetyl-CoA carboxylase is a heterohexamer composed of biotin carboxyl carrier protein (AccB), biotin carboxylase (AccC) and two subunits each of ACCase subunit alpha (AccA) and ACCase subunit beta (AccD).

It is found in the cytoplasm. The enzyme catalyses N(6)-carboxybiotinyl-L-lysyl-[protein] + acetyl-CoA = N(6)-biotinyl-L-lysyl-[protein] + malonyl-CoA. It participates in lipid metabolism; malonyl-CoA biosynthesis; malonyl-CoA from acetyl-CoA: step 1/1. Functionally, component of the acetyl coenzyme A carboxylase (ACC) complex. Biotin carboxylase (BC) catalyzes the carboxylation of biotin on its carrier protein (BCCP) and then the CO(2) group is transferred by the transcarboxylase to acetyl-CoA to form malonyl-CoA. The polypeptide is Acetyl-coenzyme A carboxylase carboxyl transferase subunit beta (Mesorhizobium japonicum (strain LMG 29417 / CECT 9101 / MAFF 303099) (Mesorhizobium loti (strain MAFF 303099))).